The sequence spans 412 residues: Poly-beta-1,6-N-acetyl-D-glucosamine synthase (412 aa).

4 helical membrane passes run 7-28 (LLFY…YFFI), 298-320 (IASI…TANI), 332-354 (IFFF…ALFI), and 364-386 (VGLI…VVIM).

This sequence belongs to the glycosyltransferase 2 family.

It localises to the cell membrane. In terms of biological role, N-acetylglucosaminyltransferase that catalyzes the polymerization of single monomer units of UDP-N-acetylglucosamine to produce the linear homomer poly-beta-1,6-N-acetyl-D-glucosamine (PNAG, also referred to as PIA), a biofilm adhesin polysaccharide. Requires IcaD for full activity. The protein is Poly-beta-1,6-N-acetyl-D-glucosamine synthase (icaA) of Staphylococcus epidermidis (strain ATCC 35984 / DSM 28319 / BCRC 17069 / CCUG 31568 / BM 3577 / RP62A).